We begin with the raw amino-acid sequence, 252 residues long: Probable anguibactin biosynthesis thioesterase AngT (252 aa).

Active-site residues include Ser92 and His229.

It belongs to the thioesterase family.

It functions in the pathway siderophore biosynthesis; anguibactin biosynthesis. In terms of biological role, probable thioesterase. Involved in anguibactin production, but is not essential for virulence or iron transport gene expression. In Vibrio anguillarum (strain ATCC 68554 / 775) (Listonella anguillarum), this protein is Probable anguibactin biosynthesis thioesterase AngT (angT).